A 595-amino-acid polypeptide reads, in one-letter code: Aspartate--tRNA(Asp/Asn) ligase (595 aa).

Glutamate 175 contacts L-aspartate. Positions 199 to 202 are aspartate; it reads QQYK. Positions 221 and 454 each coordinate L-aspartate. 221–223 serves as a coordination point for ATP; that stretch reads RDE. Glutamate 488 lines the ATP pocket. Arginine 495 serves as a coordination point for L-aspartate. 540 to 543 lines the ATP pocket; that stretch reads GIDR.

The protein belongs to the class-II aminoacyl-tRNA synthetase family. Type 1 subfamily. In terms of assembly, homodimer.

Its subcellular location is the cytoplasm. The enzyme catalyses tRNA(Asx) + L-aspartate + ATP = L-aspartyl-tRNA(Asx) + AMP + diphosphate. Aspartyl-tRNA synthetase with relaxed tRNA specificity since it is able to aspartylate not only its cognate tRNA(Asp) but also tRNA(Asn). Reaction proceeds in two steps: L-aspartate is first activated by ATP to form Asp-AMP and then transferred to the acceptor end of tRNA(Asp/Asn). The polypeptide is Aspartate--tRNA(Asp/Asn) ligase (Brucella canis (strain ATCC 23365 / NCTC 10854 / RM-666)).